The sequence spans 401 residues: Phosphoglycerate kinase (401 aa).

Residues 21–23 (DFN), Arg-36, 59–62 (HLGR), Arg-119, and Arg-160 contribute to the substrate site. Residues Lys-212, Glu-330, and 357-360 (GGDS) each bind ATP.

This sequence belongs to the phosphoglycerate kinase family. Monomer.

It localises to the cytoplasm. It catalyses the reaction (2R)-3-phosphoglycerate + ATP = (2R)-3-phospho-glyceroyl phosphate + ADP. It functions in the pathway carbohydrate degradation; glycolysis; pyruvate from D-glyceraldehyde 3-phosphate: step 2/5. This is Phosphoglycerate kinase from Limosilactobacillus reuteri subsp. reuteri (strain JCM 1112) (Lactobacillus reuteri).